Consider the following 486-residue polypeptide: Elastin-binding protein EbpS (486 aa).

A compositionally biased stretch (basic and acidic residues) spans 1–40; the sequence is MSNNFKDDFEKNRQSIDTNSHQDHTEDVEKDQSELEHQDT. The disordered stretch occupies residues 1-314; the sequence is MSNNFKDDFE…NHDRDKERKK (314 aa). At 2-204 the chain is on the extracellular side; sequence SNNFKDDFEK…ESKDHHSGKK (203 aa). Positions 14 to 34 are elastin-binding; sequence QSIDTNSHQDHTEDVEKDQSE. A compositionally biased stretch (polar residues) spans 64-85; sequence TNHNKQVHNESQTSEDNVQNEA. Basic and acidic residues-rich tracts occupy residues 103–118 and 126–149; these read EPSHQDSTPQHEEEYY and DKSHPEPIEDNDKHETIKDAENNT. The span at 150-166 shows a compositional bias: polar residues; that stretch reads EHSTVSDKSIAEQSQQP. The segment covering 180–199 has biased composition (basic and acidic residues); that stretch reads SKDKHDDVTVKQDKDESKDH. Low complexity-rich tracts occupy residues 204 to 225 and 233 to 246; these read KGAAIGAGTAGVAGAAGAMGVS and DAQNKSNSDKSNNS. The chain crosses the membrane as a helical span at residues 205–225; it reads GAAIGAGTAGVAGAAGAMGVS. Residues 226–319 lie on the Cytoplasmic side of the membrane; that stretch reads KAKKHSNDAQ…KERKKGGMAK (94 aa). Over residues 247–259 the composition is skewed to basic and acidic residues; sequence TEDKASQDKSKDH. The segment covering 278 to 297 has biased composition (low complexity); it reads GAASKSASAASKPHASNNAS. Residues 299–314 show a composition bias toward basic and acidic residues; that stretch reads NHDEHDNHDRDKERKK. The chain crosses the membrane as a helical span at residues 320 to 340; it reads VLLPLIAAVLIIGALAIFGGM. Residues 341–486 lie on the Extracellular side of the membrane; sequence ALNNHNNGTK…IRNGQQIVIP (146 aa). The disordered stretch occupies residues 351 to 440; it reads ENKIANTNKN…QRQGGGQRHT (90 aa). A compositionally biased stretch (basic and acidic residues) spans 361 to 398; the sequence is NADESKDKDTSKDASKDKSKSTDSDKSKEDQDKATKDE. Positions 403-431 are enriched in low complexity; it reads QNNANQANNQAQNNQNQQQANQNQQQQQQ. The LysM domain maps to 437-485; it reads QRHTVNGQENLYRIAIQYYGSGSPENVEKIRRANGLSGNNIRNGQQIVI.

It localises to the cell membrane. Its function is as follows. Promotes binding of soluble elastin peptides and tropoelastin to S.aureus cells although it is not able to promote bacterial adherence to immobilized elastin and, therefore, is not a microbial surface component recognizing adhesive matrix molecule (MSCRAMM). The protein is Elastin-binding protein EbpS (ebpS) of Staphylococcus aureus (strain Mu50 / ATCC 700699).